The chain runs to 476 residues: Glycogen synthase (476 aa).

Lys-15 is an ADP-alpha-D-glucose binding site.

It belongs to the glycosyltransferase 1 family. Bacterial/plant glycogen synthase subfamily.

It catalyses the reaction [(1-&gt;4)-alpha-D-glucosyl](n) + ADP-alpha-D-glucose = [(1-&gt;4)-alpha-D-glucosyl](n+1) + ADP + H(+). The protein operates within glycan biosynthesis; glycogen biosynthesis. Functionally, synthesizes alpha-1,4-glucan chains using ADP-glucose. In Yersinia pestis bv. Antiqua (strain Antiqua), this protein is Glycogen synthase.